We begin with the raw amino-acid sequence, 176 residues long: 3-hydroxydecanoyl-[acyl-carrier-protein] dehydratase (176 aa).

His71 is an active-site residue.

The protein belongs to the thioester dehydratase family. FabA subfamily. As to quaternary structure, homodimer.

Its subcellular location is the cytoplasm. The catalysed reaction is a (3R)-hydroxyacyl-[ACP] = a (2E)-enoyl-[ACP] + H2O. The enzyme catalyses (3R)-hydroxydecanoyl-[ACP] = (2E)-decenoyl-[ACP] + H2O. It catalyses the reaction (2E)-decenoyl-[ACP] = (3Z)-decenoyl-[ACP]. The protein operates within lipid metabolism; fatty acid biosynthesis. Necessary for the introduction of cis unsaturation into fatty acids. Catalyzes the dehydration of (3R)-3-hydroxydecanoyl-ACP to E-(2)-decenoyl-ACP and then its isomerization to Z-(3)-decenoyl-ACP. Can catalyze the dehydratase reaction for beta-hydroxyacyl-ACPs with saturated chain lengths up to 16:0, being most active on intermediate chain length. The protein is 3-hydroxydecanoyl-[acyl-carrier-protein] dehydratase of Afipia carboxidovorans (strain ATCC 49405 / DSM 1227 / KCTC 32145 / OM5) (Oligotropha carboxidovorans).